Reading from the N-terminus, the 230-residue chain is Large ribosomal subunit protein uL1 (230 aa).

It belongs to the universal ribosomal protein uL1 family. Part of the 50S ribosomal subunit.

Functionally, binds directly to 23S rRNA. The L1 stalk is quite mobile in the ribosome, and is involved in E site tRNA release. Its function is as follows. Protein L1 is also a translational repressor protein, it controls the translation of the L11 operon by binding to its mRNA. The polypeptide is Large ribosomal subunit protein uL1 (Granulibacter bethesdensis (strain ATCC BAA-1260 / CGDNIH1)).